A 152-amino-acid polypeptide reads, in one-letter code: SKP1-like protein 10 (152 aa).

The interaction with the F-box domain of F-box proteins stretch occupies residues 94–152 (IMAANYLNIKSLLDLACQTVADMIKDNTVEHTRKFFNIENDYTHEEEEAVRRENQWGFE).

The protein belongs to the SKP1 family. In terms of assembly, part of a SCF (SKP1-cullin-F-box) protein ligase complex. Interacts with CPR1/CPR30. As to expression, expressed in young seedlings, roots, leaves, floral stems, inflorescences, and siliques.

It is found in the nucleus. Its pathway is protein modification; protein ubiquitination. In terms of biological role, involved in ubiquitination and subsequent proteasomal degradation of target proteins. Together with CUL1, RBX1 and a F-box protein, it forms a SCF E3 ubiquitin ligase complex. The functional specificity of this complex depends on the type of F-box protein. In the SCF complex, it serves as an adapter that links the F-box protein to CUL1. In Arabidopsis thaliana (Mouse-ear cress), this protein is SKP1-like protein 10 (ASK10).